We begin with the raw amino-acid sequence, 214 residues long: Putative ankyrin repeat protein RF_1081 (214 aa).

Positions 1 to 14 (MRKQQIPTLSTSAL) are enriched in polar residues. Residues 1–32 (MRKQQIPTLSTSALDKSPGPGSPDSDIEMKST) are disordered. The stretch at 67-135 (NPNALLHEAA…EEPILVTKKD (69 aa)) is one ANK repeat.

This is Putative ankyrin repeat protein RF_1081 from Rickettsia felis (strain ATCC VR-1525 / URRWXCal2) (Rickettsia azadi).